A 92-amino-acid chain; its full sequence is Small ribosomal subunit protein uS19c (92 aa).

The protein belongs to the universal ribosomal protein uS19 family.

Its subcellular location is the plastid. Functionally, protein S19 forms a complex with S13 that binds strongly to the 16S ribosomal RNA. The protein is Small ribosomal subunit protein uS19c of Cuscuta obtusiflora (Peruvian dodder).